Reading from the N-terminus, the 431-residue chain is Aspartokinase (431 aa).

The protein belongs to the aspartokinase family.

The enzyme catalyses L-aspartate + ATP = 4-phospho-L-aspartate + ADP. It functions in the pathway amino-acid biosynthesis; L-lysine biosynthesis via DAP pathway; (S)-tetrahydrodipicolinate from L-aspartate: step 1/4. The protein operates within amino-acid biosynthesis; L-methionine biosynthesis via de novo pathway; L-homoserine from L-aspartate: step 1/3. It participates in amino-acid biosynthesis; L-threonine biosynthesis; L-threonine from L-aspartate: step 1/5. The chain is Aspartokinase (lysC) from Chlamydia trachomatis serovar D (strain ATCC VR-885 / DSM 19411 / UW-3/Cx).